Reading from the N-terminus, the 1150-residue chain is ATP-dependent helicase/deoxyribonuclease subunit B (1150 aa).

8-15 (GRAGSGKS) provides a ligand contact to ATP. [4Fe-4S] cluster contacts are provided by Cys786, Cys1106, Cys1109, and Cys1115.

This sequence belongs to the helicase family. AddB/RexB type 1 subfamily. In terms of assembly, heterodimer of AddA and AddB. Requires Mg(2+) as cofactor. [4Fe-4S] cluster serves as cofactor.

The heterodimer acts as both an ATP-dependent DNA helicase and an ATP-dependent, dual-direction single-stranded exonuclease. Recognizes the chi site generating a DNA molecule suitable for the initiation of homologous recombination. The AddB subunit has 5' -&gt; 3' nuclease activity but not helicase activity. The polypeptide is ATP-dependent helicase/deoxyribonuclease subunit B (Clostridium botulinum (strain Okra / Type B1)).